The following is a 283-amino-acid chain: Phosphatidylglycerol--prolipoprotein diacylglyceryl transferase (283 aa).

7 helical membrane passes run 18–38 (LFGH…IILG), 59–79 (LAVY…VLFY), 91–111 (IFVT…IIIA), 124–144 (ILWV…MIRL), 185–205 (TQIY…WLYW), 213–233 (YSGL…FIIE), and 251–271 (GLNM…WLII). Residue Arg-143 participates in a 1,2-diacyl-sn-glycero-3-phospho-(1'-sn-glycerol) binding.

Belongs to the Lgt family.

The protein resides in the cell inner membrane. The enzyme catalyses L-cysteinyl-[prolipoprotein] + a 1,2-diacyl-sn-glycero-3-phospho-(1'-sn-glycerol) = an S-1,2-diacyl-sn-glyceryl-L-cysteinyl-[prolipoprotein] + sn-glycerol 1-phosphate + H(+). It functions in the pathway protein modification; lipoprotein biosynthesis (diacylglyceryl transfer). Its function is as follows. Catalyzes the transfer of the diacylglyceryl group from phosphatidylglycerol to the sulfhydryl group of the N-terminal cysteine of a prolipoprotein, the first step in the formation of mature lipoproteins. The protein is Phosphatidylglycerol--prolipoprotein diacylglyceryl transferase of Porphyromonas gingivalis (strain ATCC 33277 / DSM 20709 / CIP 103683 / JCM 12257 / NCTC 11834 / 2561).